The sequence spans 314 residues: Protein phosphatase PTC7 homolog fig (314 aa).

In terms of domain architecture, PPM-type phosphatase spans 43–309; that stretch reads PYLVTVVQGR…DDITLILSSV (267 aa). Mn(2+) is bound by residues Asp-87, Gly-88, and Asp-232.

The protein belongs to the PP2C family. Mg(2+) is required as a cofactor. Requires Mn(2+) as cofactor.

It carries out the reaction O-phospho-L-seryl-[protein] + H2O = L-seryl-[protein] + phosphate. The enzyme catalyses O-phospho-L-threonyl-[protein] + H2O = L-threonyl-[protein] + phosphate. This Drosophila melanogaster (Fruit fly) protein is Protein phosphatase PTC7 homolog fig.